The primary structure comprises 480 residues: Cytochrome P450 monooxygenase ORF11 (480 aa).

Residues 9–29 traverse the membrane as a helical segment; sequence LLLLPHLSALTPKTGFLIGLA. N-linked (GlcNAc...) asparagine glycosylation is found at asparagine 265 and asparagine 352. Cysteine 449 serves as a coordination point for heme.

It belongs to the cytochrome P450 family. Requires heme as cofactor.

It localises to the membrane. Its pathway is sesquiterpene biosynthesis. Its function is as follows. Cytochrome P450 monooxygenase; part of the gene cluster that mediates the biosynthesis of PR-toxin, a bicyclic sesquiterpene belonging to the eremophilane class and acting as a mycotoxin. The first step of the pathway is catalyzed by the aristolochene synthase which performs the cyclization of trans,trans-farnesyl diphosphate (FPP) to the bicyclic sesquiterpene aristolochene. Following the formation of aristolochene, the non-oxygenated aristolochene is converted to the trioxygenated intermediate eremofortin B, via 7-epi-neopetasone. This conversion appears to involve three enzymes, a hydroxysterol oxidase-like enzyme, the quinone-oxidase prx3 that forms the quinone-type-structure in the bicyclic nucleus of aristolochene with the C8-oxo group and the C-3 hydroxyl group, and the P450 monooxygenase ORF6 that introduces the epoxide at the double bond between carbons 1 and 2. No monoxy or dioxy-intermediates have been reported to be released to the broth, so these three early oxidative reactions may be coupled together. Eremofortin B is further oxidized by another P450 monooxygenase, that introduces a second epoxide between carbons 7 and 11 prior to acetylation to eremofortin A by the acetyltransferase ORF8. The second epoxidation may be performed by a second P450 monooxygenase. After the acetylation step, eremofortin A is converted to eremofortin C and then to PR-toxin. First the conversion of eremofortin A to eremofortin C proceeds by oxidation of the side chain of the molecule at C-12 and is catalyzed by the short-chain oxidoreductase prx1. The cytochrome P450 monooxygenase ORF6 is probably also involved in this step. The primary alcohol formed at C-12 is finally oxidized by the short-chain alcohol dehydrogenase prx4 that forms PR-toxin. The sequence is that of Cytochrome P450 monooxygenase ORF11 from Penicillium roqueforti (strain FM164).